A 179-amino-acid chain; its full sequence is Ubiquinol-cytochrome c reductase iron-sulfur subunit (179 aa).

Residues 14–35 (FLYVATAAVGAAGVAAVAWPFI) form a helical membrane-spanning segment. Residues 80-173 (AKEIQSEEAA…YEFVDNTKIR (94 aa)) enclose the Rieske domain. Residues Cys-118, His-120, Cys-137, and His-140 each coordinate [2Fe-2S] cluster. Cys-123 and Cys-139 form a disulfide bridge.

It belongs to the Rieske iron-sulfur protein family. As to quaternary structure, the main subunits of complex b-c1 are: cytochrome b, cytochrome c1 and the Rieske protein. The cofactor is [2Fe-2S] cluster.

The protein resides in the cell membrane. The enzyme catalyses a quinol + 2 Fe(III)-[cytochrome c](out) = a quinone + 2 Fe(II)-[cytochrome c](out) + 2 H(+)(out). Its function is as follows. Component of the ubiquinol-cytochrome c reductase complex (complex III or cytochrome b-c1 complex), which is a respiratory chain that generates an electrochemical potential coupled to ATP synthesis. This chain is Ubiquinol-cytochrome c reductase iron-sulfur subunit (petA), found in Blastochloris viridis (Rhodopseudomonas viridis).